The sequence spans 25 residues: Non-specific lipid-transfer protein 3 (25 aa).

As to expression, seeds (at protein level).

In terms of biological role, plant non-specific lipid-transfer proteins transfer phospholipids as well as galactolipids across membranes. May play a role in wax or cutin deposition in the cell walls of expanding epidermal cells and certain secretory tissues. Has antibacterial and antifungal activity. Displays antibacterial activity towards both Gram-negative bacteria, P.carotovorum (IC(50)=11.5 uM) and P.syringae (IC(50)=12.0 uM), and Gram-positive bacterium C.michiganensis subsp michiganense (IC(50)=11.2 uM). Also displays antifungal activity towards A.niger VKM F-33 (IC(50)=1.05 uM) and B.cinerea TSKHA (IC(50)=1.88 uM) and relatively moderate activity towards B.sorokiniana VKM F-1448 (IC(50)=1.55 uM). Displays some inhibitory activity towards P.infestans OSV12. This chain is Non-specific lipid-transfer protein 3, found in Nigella sativa (Black cumin).